A 122-amino-acid polypeptide reads, in one-letter code: Class I hydrophobin 2 (122 aa).

An N-terminal signal peptide occupies residues 1–22 (MFARVSTLFAMFFLGLALMVSA). Disulfide bonds link cysteine 40/cysteine 101, cysteine 47/cysteine 95, cysteine 48/cysteine 81, and cysteine 102/cysteine 115.

Belongs to the fungal hydrophobin family. In terms of assembly, self-assembles to form functional amyloid fibrils called rodlets. Self-assembly into fibrillar rodlets occurs spontaneously at hydrophobic:hydrophilic interfaces and the rodlets further associate laterally to form amphipathic monolayers.

The protein localises to the secreted. Its subcellular location is the cell wall. Aerial growth, conidiation, and dispersal of filamentous fungi in the environment rely upon a capability of their secreting small amphipathic proteins called hydrophobins (HPBs) with low sequence identity. Class I can self-assemble into an outermost layer of rodlet bundles on aerial cell surfaces, conferring cellular hydrophobicity that supports fungal growth, development and dispersal; whereas Class II form highly ordered films at water-air interfaces through intermolecular interactions but contribute nothing to the rodlet structure. Hah2 is a class I hydrophobin that is involved in aerial growth of mycelia, but does not play a role in pathogenesis. The chain is Class I hydrophobin 2 from Heterobasidion annosum (Root rot fungus).